We begin with the raw amino-acid sequence, 460 residues long: uncharacterized protein (460 aa).

It to yeast YGL164c.

This is an uncharacterized protein from Schizosaccharomyces pombe (strain 972 / ATCC 24843) (Fission yeast).